Here is a 419-residue protein sequence, read N- to C-terminus: Putative BTB/POZ domain-containing protein L85 (419 aa).

Positions 16–89 constitute a BTB domain; it reads TDLTIVLKDD…FYDKTSTNSE (74 aa). A disordered region spans residues 250–290; sequence SSSNDSDEDASETESEHNSETESEHNSETESEHNSETESKH. Residues 263 to 290 show a composition bias toward basic and acidic residues; the sequence is ESEHNSETESEHNSETESEHNSETESKH.

This sequence belongs to the mimivirus BTB/WD family.

The polypeptide is Putative BTB/POZ domain-containing protein L85 (Acanthamoeba polyphaga (Amoeba)).